We begin with the raw amino-acid sequence, 122 residues long: Large ribosomal subunit protein uL14 (122 aa).

This sequence belongs to the universal ribosomal protein uL14 family. In terms of assembly, part of the 50S ribosomal subunit. Forms a cluster with proteins L3 and L19. In the 70S ribosome, L14 and L19 interact and together make contacts with the 16S rRNA in bridges B5 and B8.

Functionally, binds to 23S rRNA. Forms part of two intersubunit bridges in the 70S ribosome. This chain is Large ribosomal subunit protein uL14, found in Lactobacillus helveticus (strain DPC 4571).